Reading from the N-terminus, the 209-residue chain is 3-demethoxyubiquinol 3-hydroxylase (209 aa).

6 residues coordinate Fe cation: Glu-58, Glu-88, His-91, Glu-140, Glu-172, and His-175.

Belongs to the COQ7 family. Fe cation serves as cofactor.

It is found in the cell membrane. The enzyme catalyses a 5-methoxy-2-methyl-3-(all-trans-polyprenyl)benzene-1,4-diol + AH2 + O2 = a 3-demethylubiquinol + A + H2O. It functions in the pathway cofactor biosynthesis; ubiquinone biosynthesis. Functionally, catalyzes the hydroxylation of 2-nonaprenyl-3-methyl-6-methoxy-1,4-benzoquinol during ubiquinone biosynthesis. This Polaromonas sp. (strain JS666 / ATCC BAA-500) protein is 3-demethoxyubiquinol 3-hydroxylase.